The sequence spans 310 residues: Probable manganese-dependent inorganic pyrophosphatase (310 aa).

Residues His-9, Asp-13, Asp-15, Asp-76, His-98, and Asp-150 each contribute to the Mn(2+) site.

It belongs to the PPase class C family. The cofactor is Mn(2+).

It is found in the cytoplasm. It catalyses the reaction diphosphate + H2O = 2 phosphate + H(+). This is Probable manganese-dependent inorganic pyrophosphatase from Streptococcus thermophilus (strain ATCC BAA-491 / LMD-9).